Here is a 64-residue protein sequence, read N- to C-terminus: UPF0370 protein YPA_2246 (64 aa).

Residues 3 to 23 (WLADYWWIILILLVGMILNGI) traverse the membrane as a helical segment. A compositionally biased stretch (basic and acidic residues) spans 36-47 (DNKPELPPHRDN). The segment at 36-64 (DNKPELPPHRDNNAQWDDEDDWPDQNKKK) is disordered.

This sequence belongs to the UPF0370 family.

The protein localises to the cell membrane. This Yersinia pestis bv. Antiqua (strain Antiqua) protein is UPF0370 protein YPA_2246.